The following is a 115-amino-acid chain: NAD(P)H-quinone oxidoreductase subunit M (115 aa).

Belongs to the complex I NdhM subunit family. NDH-1 can be composed of about 15 different subunits; different subcomplexes with different compositions have been identified which probably have different functions.

The protein localises to the cellular thylakoid membrane. The catalysed reaction is a plastoquinone + NADH + (n+1) H(+)(in) = a plastoquinol + NAD(+) + n H(+)(out). It carries out the reaction a plastoquinone + NADPH + (n+1) H(+)(in) = a plastoquinol + NADP(+) + n H(+)(out). Functionally, NDH-1 shuttles electrons from an unknown electron donor, via FMN and iron-sulfur (Fe-S) centers, to quinones in the respiratory and/or the photosynthetic chain. The immediate electron acceptor for the enzyme in this species is believed to be plastoquinone. Couples the redox reaction to proton translocation, and thus conserves the redox energy in a proton gradient. Cyanobacterial NDH-1 also plays a role in inorganic carbon-concentration. In Prochlorococcus marinus (strain MIT 9301), this protein is NAD(P)H-quinone oxidoreductase subunit M.